A 574-amino-acid polypeptide reads, in one-letter code: Proline--tRNA ligase (574 aa).

This sequence belongs to the class-II aminoacyl-tRNA synthetase family. ProS type 1 subfamily. As to quaternary structure, homodimer.

The protein resides in the cytoplasm. It carries out the reaction tRNA(Pro) + L-proline + ATP = L-prolyl-tRNA(Pro) + AMP + diphosphate. Functionally, catalyzes the attachment of proline to tRNA(Pro) in a two-step reaction: proline is first activated by ATP to form Pro-AMP and then transferred to the acceptor end of tRNA(Pro). As ProRS can inadvertently accommodate and process non-cognate amino acids such as alanine and cysteine, to avoid such errors it has two additional distinct editing activities against alanine. One activity is designated as 'pretransfer' editing and involves the tRNA(Pro)-independent hydrolysis of activated Ala-AMP. The other activity is designated 'posttransfer' editing and involves deacylation of mischarged Ala-tRNA(Pro). The misacylated Cys-tRNA(Pro) is not edited by ProRS. This is Proline--tRNA ligase from Buchnera aphidicola subsp. Baizongia pistaciae (strain Bp).